The chain runs to 992 residues: P3N-PIPO polyprotein (992 aa).

The 141-residue stretch at 168–308 (TSQCRKPTYV…VENMEDIQHY (141 aa)) folds into the Peptidase S30 domain. Residues His221, Glu230, and Ser262 each act as for P1 proteinase activity in the active site. Residues 361-364 (KLSC) carry the Involved in interaction with stylet and aphid transmission motif. Positions 617-619 (PTK) match the Involved in virions binding and aphid transmission motif. Residues 643-765 (MYIAKEGFCY…QSEMKFYRVG (123 aa)) form the Peptidase C6 domain. Residues Cys651 and His724 each act as for helper component proteinase activity in the active site.

Belongs to the potyviridae P3N-PIPO polyprotein family. Interacts (via PIPO domain) with host PCaP1 protein; this interaction may help to anchor the movement complex to the plasma membrane from which the complex could move to the plasmodesmata. Potyviral RNA is expressed as two polyproteins which undergo post-translational proteolytic processing. Genome polyprotein is processed by NIa-pro, P1 and HC-pro proteinases resulting in the production of at least ten individual proteins. P3N-PIPO is cleaved by P1 and HC-pro proteinases resulting in the production of three individual proteins. The P1 proteinase and the HC-pro cleave only their respective C-termini autocatalytically.

Its subcellular location is the host cell junction. The protein localises to the host plasmodesma. The enzyme catalyses Hydrolyzes a Gly-|-Gly bond at its own C-terminus, commonly in the sequence -Tyr-Xaa-Val-Gly-|-Gly, in the processing of the potyviral polyprotein.. In terms of biological role, required for aphid transmission and also has proteolytic activity. Only cleaves a Gly-Gly dipeptide at its own C-terminus. Interacts with virions and aphid stylets. Acts as a suppressor of RNA-mediated gene silencing, also known as post-transcriptional gene silencing (PTGS), a mechanism of plant viral defense that limits the accumulation of viral RNAs. May have RNA-binding activity. Its function is as follows. Allows efficient cell to cell propagation, by bypassing the host cell wall barrier. Transports viral genome to neighboring plant cells directly through plasmosdesmata, without any budding. This is P3N-PIPO polyprotein from Glycine max (Soybean).